Reading from the N-terminus, the 361-residue chain is [LysW]-lysine hydrolase (361 aa).

His-67 is a binding site for Zn(2+). The active site involves Asp-69. Asp-91 contacts Zn(2+). Glu-124 acts as the Proton acceptor in catalysis. Zn(2+) is bound by residues Glu-125, Glu-148, and His-326.

Belongs to the peptidase M20A family. LysK subfamily. Requires Zn(2+) as cofactor. Co(2+) serves as cofactor.

The protein resides in the cytoplasm. It carries out the reaction [amino-group carrier protein]-C-terminal-gamma-(L-lysyl)-L-glutamate + H2O = [amino-group carrier protein]-C-terminal-L-glutamate + L-lysine. It participates in amino-acid biosynthesis; L-lysine biosynthesis via AAA pathway; L-lysine from L-alpha-aminoadipate (Thermus route): step 5/5. Functionally, catalyzes the release of L-lysine from [LysW]-gamma-L-lysine. The polypeptide is [LysW]-lysine hydrolase (Thermus thermophilus (strain ATCC 27634 / DSM 579 / HB8)).